Reading from the N-terminus, the 199-residue chain is NAD(P)H dehydrogenase (quinone) (199 aa).

Positions 4 to 190 (VLVLYYSSYG…TGARYQGRKI (187 aa)) constitute a Flavodoxin-like domain. FMN-binding positions include 10 to 15 (SSYGHL) and 78 to 80 (TRF). Tyr12 contacts NAD(+). Trp98 provides a ligand contact to substrate. FMN is bound by residues 113–119 (STATQHG) and His134.

It belongs to the WrbA family. FMN is required as a cofactor.

The catalysed reaction is a quinone + NADH + H(+) = a quinol + NAD(+). It carries out the reaction a quinone + NADPH + H(+) = a quinol + NADP(+). This chain is NAD(P)H dehydrogenase (quinone), found in Caulobacter vibrioides (strain ATCC 19089 / CIP 103742 / CB 15) (Caulobacter crescentus).